Here is a 380-residue protein sequence, read N- to C-terminus: Chaperone protein DnaJ (380 aa).

Residues 5–70 (DFYEVLGVSR…QKRAAYDQYG (66 aa)) enclose the J domain. The segment at 135-213 (GCEKDIEIPT…CHGDGRVQKT (79 aa)) adopts a CR-type zinc-finger fold. Zn(2+)-binding residues include Cys148, Cys151, Cys165, Cys168, Cys187, Cys190, Cys201, and Cys204. CXXCXGXG motif repeat units follow at residues 148–155 (CEPCDGTG), 165–172 (CSTCHGQG), 187–194 (CPTCHGKG), and 201–208 (CNSCHGDG).

The protein belongs to the DnaJ family. As to quaternary structure, homodimer. Zn(2+) is required as a cofactor.

It localises to the cytoplasm. Its function is as follows. Participates actively in the response to hyperosmotic and heat shock by preventing the aggregation of stress-denatured proteins and by disaggregating proteins, also in an autonomous, DnaK-independent fashion. Unfolded proteins bind initially to DnaJ; upon interaction with the DnaJ-bound protein, DnaK hydrolyzes its bound ATP, resulting in the formation of a stable complex. GrpE releases ADP from DnaK; ATP binding to DnaK triggers the release of the substrate protein, thus completing the reaction cycle. Several rounds of ATP-dependent interactions between DnaJ, DnaK and GrpE are required for fully efficient folding. Also involved, together with DnaK and GrpE, in the DNA replication of plasmids through activation of initiation proteins. The chain is Chaperone protein DnaJ from Aliivibrio salmonicida (strain LFI1238) (Vibrio salmonicida (strain LFI1238)).